The chain runs to 322 residues: ATP-dependent 6-phosphofructokinase (322 aa).

Residues Gly12, 73-74 (RF), and 103-106 (GDGT) each bind ATP. Mg(2+) is bound at residue Asp104. 126 to 128 (TID) is a substrate binding site. The Proton acceptor role is filled by Asp128. Arg155 is an ADP binding site. Residues Arg163 and 170 to 172 (MGR) contribute to the substrate site. Residues 186–188 (GSE), Lys212, and 214–216 (KPS) each bind ADP. Substrate-binding positions include Glu223, Arg245, and 251-254 (HTQR).

The protein belongs to the phosphofructokinase type A (PFKA) family. ATP-dependent PFK group I subfamily. Prokaryotic clade 'B1' sub-subfamily. Homotetramer. Mg(2+) is required as a cofactor.

Its subcellular location is the cytoplasm. The enzyme catalyses beta-D-fructose 6-phosphate + ATP = beta-D-fructose 1,6-bisphosphate + ADP + H(+). It participates in carbohydrate degradation; glycolysis; D-glyceraldehyde 3-phosphate and glycerone phosphate from D-glucose: step 3/4. Allosterically activated by ADP and other diphosphonucleosides, and allosterically inhibited by phosphoenolpyruvate. In terms of biological role, catalyzes the phosphorylation of D-fructose 6-phosphate to fructose 1,6-bisphosphate by ATP, the first committing step of glycolysis. This Mesomycoplasma hyopneumoniae (strain 232) (Mycoplasma hyopneumoniae) protein is ATP-dependent 6-phosphofructokinase.